A 753-amino-acid chain; its full sequence is Neuroendocrine convertase 1 (753 aa).

A signal peptide spans 1 to 27 (MEQRGWTLQCTAFAFFCVWCALSSVKA). Positions 28–110 (KRQFVNEWAA…QQYEKERSKR (83 aa)) are excised as a propeptide. The region spanning 129 to 450 (QWYLQDTRMT…FGLLNAKALV (322 aa)) is the Peptidase S8 domain. Residues D167 and H208 each act as charge relay system in the active site. Disulfide bonds link C225/C374 and C317/C347. S382 (charge relay system) is an active-site residue. N-linked (GlcNAc...) asparagine glycosylation occurs at N401. A P/Homo B domain is found at 460–597 (NVPEKKECVV…KLILHGTSSQ (138 aa)). Cysteines 467 and 494 form a disulfide. A compositionally biased stretch (polar residues) spans 633–651 (QKSLNGNLLVPKNSSSSNV). The interval 633 to 663 (QKSLNGNLLVPKNSSSSNVEGRRDEQVQGTP) is disordered. Residue N645 is glycosylated (N-linked (GlcNAc...) asparagine).

Belongs to the peptidase S8 family. Furin subfamily. It depends on Ca(2+) as a cofactor.

It is found in the cytoplasmic vesicle. The protein localises to the secretory vesicle. The enzyme catalyses Release of protein hormones, neuropeptides and renin from their precursors, generally by hydrolysis of -Lys-Arg-|- bonds.. In terms of biological role, involved in the processing of hormone and other protein precursors at sites comprised of pairs of basic amino acid residues. Substrates include POMC, renin, enkephalin, dynorphin, somatostatin, insulin and AGRP. The protein is Neuroendocrine convertase 1 (Pcsk1) of Mus cookii (Cook's mouse).